Consider the following 240-residue polypeptide: Adenosylcobinamide-GDP ribazoletransferase (240 aa).

5 consecutive transmembrane segments (helical) span residues 31 to 51, 62 to 81, 109 to 129, 133 to 153, and 179 to 199; these read LLYYPLVGLLFGLLLWLASHL, ALLLTLWVLLSGALHLDGLA, IAVVTLVLVLLLKFCALWVLV, IGAQLLLAPLIGRAAMLGLFL, and VLLVCVLFCLFLGGWSVLLAL.

It belongs to the CobS family. Mg(2+) is required as a cofactor.

The protein localises to the cell inner membrane. It carries out the reaction alpha-ribazole + adenosylcob(III)inamide-GDP = adenosylcob(III)alamin + GMP + H(+). The enzyme catalyses alpha-ribazole 5'-phosphate + adenosylcob(III)inamide-GDP = adenosylcob(III)alamin 5'-phosphate + GMP + H(+). Its pathway is cofactor biosynthesis; adenosylcobalamin biosynthesis; adenosylcobalamin from cob(II)yrinate a,c-diamide: step 7/7. Functionally, joins adenosylcobinamide-GDP and alpha-ribazole to generate adenosylcobalamin (Ado-cobalamin). Also synthesizes adenosylcobalamin 5'-phosphate from adenosylcobinamide-GDP and alpha-ribazole 5'-phosphate. The chain is Adenosylcobinamide-GDP ribazoletransferase from Pseudomonas putida (strain ATCC 700007 / DSM 6899 / JCM 31910 / BCRC 17059 / LMG 24140 / F1).